A 240-amino-acid chain; its full sequence is MQPQYQMGYDRAITVFSPDGRLYQVEYAREAVKRGTTAVGIKAHDGVVLIVDKRVSSKLLESSSIEKIFKIDEHIGVASSGLVGDARALVDRARIECQINRVSYDERIEVEALAKKLCDHMQTLTQYGGIRPYGTALLIAGVSDGESRLFETDPSGTLLEYKATGIGIGRPAAMKVFEEEYTADLALKDAILLGLKALHSATEGKFDVDTVEMGIVESSTAQFKKMTKEEVASYVGQFKQ.

Belongs to the peptidase T1A family. The 20S proteasome core is composed of 14 alpha and 14 beta subunits that assemble into four stacked heptameric rings, resulting in a barrel-shaped structure. The two inner rings, each composed of seven catalytic beta subunits, are sandwiched by two outer rings, each composed of seven alpha subunits. The catalytic chamber with the active sites is on the inside of the barrel. Has a gated structure, the ends of the cylinder being occluded by the N-termini of the alpha-subunits. Is capped at one or both ends by the proteasome regulatory ATPase, PAN.

It localises to the cytoplasm. With respect to regulation, the formation of the proteasomal ATPase PAN-20S proteasome complex, via the docking of the C-termini of PAN into the intersubunit pockets in the alpha-rings, triggers opening of the gate for substrate entry. Interconversion between the open-gate and close-gate conformations leads to a dynamic regulation of the 20S proteasome proteolysis activity. Component of the proteasome core, a large protease complex with broad specificity involved in protein degradation. In Methanoregula boonei (strain DSM 21154 / JCM 14090 / 6A8), this protein is Proteasome subunit alpha.